Consider the following 369-residue polypeptide: 3,7-dimethylxanthine N-methyltransferase TCS1 (369 aa).

An S-adenosyl-L-homocysteine-binding site is contributed by Y24. T31 contacts caffeine. C66, N71, D103, L104, S138, and F139 together coordinate S-adenosyl-L-homocysteine. Residues Y156, H159, and W160 each coordinate caffeine. Residue N177 participates in Mg(2+) binding. Caffeine is bound at residue R225. Mg(2+) contacts are provided by D263, F265, and N266. F321 lines the caffeine pocket.

This sequence belongs to the methyltransferase superfamily. Type-7 methyltransferase family. The cofactor is Mg(2+).

The enzyme catalyses 1,7-dimethylxanthine + S-adenosyl-L-methionine = caffeine + S-adenosyl-L-homocysteine + H(+). It catalyses the reaction theobromine + S-adenosyl-L-methionine = caffeine + S-adenosyl-L-homocysteine + H(+). The catalysed reaction is 7-methylxanthine + S-adenosyl-L-methionine = theobromine + S-adenosyl-L-homocysteine + H(+). Its pathway is alkaloid biosynthesis. Its function is as follows. Involved in the biosynthesis of caffeine in cv. Puer. Involved in the biosynthesis of theacrine in cv. Kucha, a caffeine-like xanthine alkaloid with diverse beneficial biological activities including anti-depressive, sedative, and hypnotic activities, improving learning and memory, increasing exercise activity, and preventing nonalcoholic fatty liver disease. Catalyzes the conversion of 7-methylxanthine (7mX) to theobromine and of theobromine to caffeine. Has 3-N- and 1-N-methylation activity. This Camellia sinensis var. assamica (Assam tea) protein is 3,7-dimethylxanthine N-methyltransferase TCS1.